The following is a 379-amino-acid chain: Homoserine O-succinyltransferase (379 aa).

Positions 51 to 360 constitute an AB hydrolase-1 domain; it reads NAVLICHALS…DAPQGHDAFL (310 aa). Catalysis depends on serine 157, which acts as the Nucleophile. Substrate is bound at residue arginine 227. Residues aspartate 323 and histidine 356 contribute to the active site. Aspartate 357 provides a ligand contact to substrate.

Belongs to the AB hydrolase superfamily. MetX family. In terms of assembly, homodimer.

The protein resides in the cytoplasm. The enzyme catalyses L-homoserine + succinyl-CoA = O-succinyl-L-homoserine + CoA. It participates in amino-acid biosynthesis; L-methionine biosynthesis via de novo pathway; O-succinyl-L-homoserine from L-homoserine: step 1/1. Functionally, transfers a succinyl group from succinyl-CoA to L-homoserine, forming succinyl-L-homoserine. This is Homoserine O-succinyltransferase from Pseudomonas aeruginosa (strain UCBPP-PA14).